The chain runs to 316 residues: MCTGLRFTDDQGNLYFGRNLDVGQDYGEGVIITPRNYPLPYKFLDNTTTKKAVIGMGIVVDGYPSYFDCFNEDGLGIAGLNFPHFAKFSDGPIDGKINLASYEIMLWVTQNFTKVSDVKEALKNVNLVNEAINSSFAVAPLHWIISDKDEAIIVEVSKQYGMKVFDDKLGVLTNSPDFNWHLTNLGNYTGLDPHDATAQSWNGQKVAPWGVGTGSLGLPGDSIPADRFVKAAYLNVNYPTVKGEKANVAKFFNILKSVAMIKGSVVNKLGSDEYTVYTACYSAATKTYYCNFENDFELKTYKLDDETMNADKLITY.

The Nucleophile role is filled by Cys2. Deoxycholate contacts are provided by Cys2 and Arg18. Residue Asn81 coordinates taurine.

It belongs to the peptidase C59 family.

The catalysed reaction is cholate + taurine = taurocholate + H2O. It catalyses the reaction taurochenodeoxycholate + H2O = chenodeoxycholate + taurine. It carries out the reaction taurodeoxycholate + H2O = deoxycholate + taurine. The enzyme catalyses glycocholate + H2O = cholate + glycine. The catalysed reaction is glycodeoxycholate + H2O = deoxycholate + glycine. Its pathway is lipid metabolism; bile acid biosynthesis. Its function is as follows. Bile salt hydrolase that catalyzes the deconjugation of glycine- and taurine-linked bile salts, which occurs naturally in the intestines of humans, releasing amino acid residues and deconjugated bile salts (bile acids). Can hydrolyze the amide bond in the bile salts taurocholate (TCA), taurodeoxycholate (TDCA), taurochenodeoxycholate (TCDCA), glycocholate (GCA) and glycodeoxycholate (GDCA). Shows highest activity toward the taurine-conjugated bile salts TCA and TCDCA. The activity toward the other three substrates (TDCA, GCA and GDCA) is relatively low. This enzyme likely contributes to bile salt resistance of the strain and may be associated with survival capability of strain JCM1131 within the human intestine by bile detoxification. The sequence is that of Conjugated bile acid hydrolase from Lactobacillus gasseri (strain ATCC 33323 / DSM 20243 / BCRC 14619 / CIP 102991 / JCM 1131 / KCTC 3163 / NCIMB 11718 / NCTC 13722 / AM63).